We begin with the raw amino-acid sequence, 553 residues long: Transcription factor IIIB 70 kDa subunit (553 aa).

The segment at 6-39 adopts a TFIIB-type zinc-finger fold; the sequence is KQQKCKTCGHTQFDVNRYTAAGDVSCLRCGTVLE. Zn(2+) contacts are provided by Cys10, Cys13, Cys31, and Cys34. 2 tandem repeats follow at residues 98-174 and 193-272. Residues 98 to 272 form an interaction with TBP and with the Pol III subunit C34 region; it reads IAAALKIPDY…LQRRLNEFKK (175 aa). Residues 281 to 553 are interaction with TBP; it reads KSFREVENLE…KGLLGGNMGF (273 aa). The segment at 473-523 is disordered; the sequence is KQEADELTGNTSKSSSGNRRKRNKSSLPAELRKELGDIDLDEDGTPRSAAD. Residues 480-489 show a composition bias toward low complexity; that stretch reads TGNTSKSSSG.

This sequence belongs to the TFIIB family. As to quaternary structure, TFIIIB comprises the TATA-binding protein (TBP), the B-related factor (BRF) and a 70 kDa polypeptide.

The protein resides in the nucleus. In terms of biological role, general activator of RNA polymerase III transcription. Interacts with TBP. Binds to Pol III subunit C34 and to the TAU135 component of TFIIIC. The polypeptide is Transcription factor IIIB 70 kDa subunit (TDS4) (Candida albicans (strain SC5314 / ATCC MYA-2876) (Yeast)).